The following is a 265-amino-acid chain: Polyglutamine-binding protein 1 (265 aa).

In terms of domain architecture, WW spans 46–80 (EGLPPSWYKVFDPSCGLPYYWNADTDLVSWLSPHD). A Phosphoserine modification is found at Ser-94. A disordered region spans residues 94-265 (SSNADAEEKL…AEASRTKQQD (172 aa)). Basic and acidic residues predominate over residues 99–175 (AEEKLDRSHD…DKADREEGKE (77 aa)). Tandem repeats lie at residues 104-110 (DRSHDKS), 111-117 (DRGHDKS), 118-124 (DRSHEKL), 125-131 (DRGHDKS), 132-138 (DRGHDKS), 139-140 (DR), 141-142 (DR), 143-144 (ER), 150-151 (DR), 152-153 (ER), 154-155 (ER), 156-157 (DR), 158-159 (ER), 160-161 (DR), and 162-163 (DR). The 5 X 7 AA approximate tandem repeats of D-R-[SG]-H-D-K-S stretch occupies residues 104 to 138 (DRSHDKSDRGHDKSDRSHEKLDRGHDKSDRGHDKS). The segment at 139–144 (DRDRER) is 3 X 2 AA tandem repeats of [DE]-R. Residues 150–163 (DRERERDRERDRDR) form a 7 X 2 AA tandem repeats of [DE]-R region. The important for interaction with TXNL4A stretch occupies residues 245–255 (YPSPGAVLRAN). Phosphoserine is present on Ser-247.

In terms of assembly, interacts with POU3F2/Brn-2, ATXN1, TXNL4A, HTT and AR. Interaction with ATXN1 correlates positively with the length of the polyglutamine tract. Interacts with RNA polymerase II large subunit in a phosphorylation-dependent manner. Forms a ternary complex with ATXN1 mutant and phosphorylated RNA polymerase II. Interacts (via C-terminus) with TXNL4A and CD2BP2. Interacts (via WW domain) with ATN1 and SF3B1, and may interact with additional splice factors. Interacts (via WW domain) with WBP11; Leading to reduce interaction between PQBP1 and TXNL4A. Interacts with CAPRIN1. Interacts with DDX1. Interacts with SFPQ. Interacts with KHSRP.

The protein resides in the nucleus. It is found in the nucleus speckle. The protein localises to the cytoplasmic granule. Intrinsically disordered protein that acts as a scaffold, and which is involved in different processes, such as pre-mRNA splicing, transcription regulation, innate immunity and neuron development. Interacts with splicing-related factors via the intrinsically disordered region and regulates alternative splicing of target pre-mRNA species. May suppress the ability of POU3F2 to transactivate the DRD1 gene in a POU3F2 dependent manner. Can activate transcription directly or via association with the transcription machinery. May be involved in ATXN1 mutant-induced cell death. The interaction with ATXN1 mutant reduces levels of phosphorylated RNA polymerase II large subunit. Involved in the assembly of cytoplasmic stress granule, possibly by participating in the transport of neuronal RNA granules. Also acts as an innate immune sensor of infection by retroviruses, by detecting the presence of reverse-transcribed DNA in the cytosol. Directly binds retroviral reverse-transcribed DNA in the cytosol and interacts with CGAS, leading to activate the cGAS-STING signaling pathway, triggering type-I interferon production. In Gorilla gorilla gorilla (Western lowland gorilla), this protein is Polyglutamine-binding protein 1 (PQBP1).